The primary structure comprises 450 residues: Bifunctional protein GlmU (450 aa).

The segment at 1–229 (MRRHAIILAA…VEEIMGVNDR (229 aa)) is pyrophosphorylase. Residues 8-11 (LAAG), Lys22, Gln72, and 77-78 (GT) contribute to the UDP-N-acetyl-alpha-D-glucosamine site. Mg(2+) is bound at residue Asp102. 3 residues coordinate UDP-N-acetyl-alpha-D-glucosamine: Gly139, Glu154, and Asn227. Residue Asn227 coordinates Mg(2+). The linker stretch occupies residues 230-250 (VMLSQAEKAMQRRTNHYHMLN). Positions 251–450 (GVTIIDPDST…RQTTKEGYRK (200 aa)) are N-acetyltransferase. UDP-N-acetyl-alpha-D-glucosamine is bound by residues Arg332 and Lys350. The active-site Proton acceptor is His362. UDP-N-acetyl-alpha-D-glucosamine contacts are provided by Tyr365 and Asn376. Residues 385-386 (NY), Ala422, and Arg439 each bind acetyl-CoA.

In the N-terminal section; belongs to the N-acetylglucosamine-1-phosphate uridyltransferase family. This sequence in the C-terminal section; belongs to the transferase hexapeptide repeat family. Homotrimer. The cofactor is Mg(2+).

It is found in the cytoplasm. The enzyme catalyses alpha-D-glucosamine 1-phosphate + acetyl-CoA = N-acetyl-alpha-D-glucosamine 1-phosphate + CoA + H(+). The catalysed reaction is N-acetyl-alpha-D-glucosamine 1-phosphate + UTP + H(+) = UDP-N-acetyl-alpha-D-glucosamine + diphosphate. It participates in nucleotide-sugar biosynthesis; UDP-N-acetyl-alpha-D-glucosamine biosynthesis; N-acetyl-alpha-D-glucosamine 1-phosphate from alpha-D-glucosamine 6-phosphate (route II): step 2/2. The protein operates within nucleotide-sugar biosynthesis; UDP-N-acetyl-alpha-D-glucosamine biosynthesis; UDP-N-acetyl-alpha-D-glucosamine from N-acetyl-alpha-D-glucosamine 1-phosphate: step 1/1. It functions in the pathway bacterial outer membrane biogenesis; LPS lipid A biosynthesis. In terms of biological role, catalyzes the last two sequential reactions in the de novo biosynthetic pathway for UDP-N-acetylglucosamine (UDP-GlcNAc). The C-terminal domain catalyzes the transfer of acetyl group from acetyl coenzyme A to glucosamine-1-phosphate (GlcN-1-P) to produce N-acetylglucosamine-1-phosphate (GlcNAc-1-P), which is converted into UDP-GlcNAc by the transfer of uridine 5-monophosphate (from uridine 5-triphosphate), a reaction catalyzed by the N-terminal domain. This chain is Bifunctional protein GlmU, found in Staphylococcus aureus (strain Mu50 / ATCC 700699).